Here is a 234-residue protein sequence, read N- to C-terminus: MKAIYEGKAKALFETEEAGVLRVYYKDDATAFNGEKKESIDGKGILNNAITTQLFELMHDNKIPTHFIKQISDREQLVRRVDIIPLEVVVRNVAAGSLAKRLGWEEGTPLLAPIVEFYYKDDALGDPLLTEDHIRLLQVATHKEVETLRQLGLWVNDVLLDFFGQHGIDVIDFKLEFGKVDGTIILADEISPDTCRLWDKETKQKLDKDVFRRDLGSLTETYGQLLTRIGGNGQ.

This sequence belongs to the SAICAR synthetase family.

It catalyses the reaction 5-amino-1-(5-phospho-D-ribosyl)imidazole-4-carboxylate + L-aspartate + ATP = (2S)-2-[5-amino-1-(5-phospho-beta-D-ribosyl)imidazole-4-carboxamido]succinate + ADP + phosphate + 2 H(+). It functions in the pathway purine metabolism; IMP biosynthesis via de novo pathway; 5-amino-1-(5-phospho-D-ribosyl)imidazole-4-carboxamide from 5-amino-1-(5-phospho-D-ribosyl)imidazole-4-carboxylate: step 1/2. The polypeptide is Phosphoribosylaminoimidazole-succinocarboxamide synthase (Exiguobacterium sp. (strain ATCC BAA-1283 / AT1b)).